The chain runs to 64 residues: Large ribosomal subunit protein bL35 (64 aa).

A disordered region spans residues 1–28; that stretch reads MPKMKTHSGAKKRFKLTGSGKLKRQQAN.

Belongs to the bacterial ribosomal protein bL35 family.

This chain is Large ribosomal subunit protein bL35, found in Renibacterium salmoninarum (strain ATCC 33209 / DSM 20767 / JCM 11484 / NBRC 15589 / NCIMB 2235).